Consider the following 136-residue polypeptide: Translation initiation factor 5A (136 aa).

Position 37 is a hypusine (lysine 37).

The protein belongs to the eIF-5A family.

It localises to the cytoplasm. In terms of biological role, functions by promoting the formation of the first peptide bond. The sequence is that of Translation initiation factor 5A from Thermococcus kodakarensis (strain ATCC BAA-918 / JCM 12380 / KOD1) (Pyrococcus kodakaraensis (strain KOD1)).